Here is a 162-residue protein sequence, read N- to C-terminus: uncharacterized protein (162 aa).

The disordered stretch occupies residues 1 to 23 (MAQLPLSPAPQRPETKTPGKPEA). Residues 13-23 (PETKTPGKPEA) are compositionally biased toward basic and acidic residues.

This is an uncharacterized protein from Rhodobacter capsulatus (Rhodopseudomonas capsulata).